The chain runs to 660 residues: Chaperone protein DnaK (660 aa).

The residue at position 201 (T201) is a Phosphothreonine; by autocatalysis. A disordered region spans residues 599 to 660; the sequence is EAMQAQSASA…ADVEIVDKPE (62 aa). Residues 600–617 are compositionally biased toward low complexity; the sequence is AMQAQSASAAASSAANAQ.

The protein belongs to the heat shock protein 70 family.

Its function is as follows. Acts as a chaperone. This is Chaperone protein DnaK from Chlamydia trachomatis serovar A (strain ATCC VR-571B / DSM 19440 / HAR-13).